The following is a 462-amino-acid chain: Putative zinc metalloprotease RSc1411 (462 aa).

A helical transmembrane segment spans residues 1–21 (MLTVLAFVFAIAVLIVVHELG). Position 18 (His18) interacts with Zn(2+). Glu19 is a catalytic residue. Residue His22 participates in Zn(2+) binding. Residues 102–124 (FAIVAAGPVFNFLLAIALYALLA) form a helical membrane-spanning segment. Residues 201 to 283 (TVRLRELPSA…MPEQNASIDI (83 aa)) form the PDZ domain. Helical transmembrane passes span 386–406 (FVAF…LPVP) and 430–450 (WQAV…SLAL).

It belongs to the peptidase M50B family. Requires Zn(2+) as cofactor.

The protein resides in the cell inner membrane. The chain is Putative zinc metalloprotease RSc1411 from Ralstonia nicotianae (strain ATCC BAA-1114 / GMI1000) (Ralstonia solanacearum).